We begin with the raw amino-acid sequence, 542 residues long: Glucans biosynthesis protein G (542 aa).

An N-terminal signal peptide occupies residues 1–34 (MVSLLRCPSSKPYSSLICSLTLGAVVALSGVAYA).

It belongs to the OpgD/OpgG family.

The protein resides in the periplasm. Its pathway is glycan metabolism; osmoregulated periplasmic glucan (OPG) biosynthesis. Functionally, involved in the biosynthesis of osmoregulated periplasmic glucans (OPGs). This chain is Glucans biosynthesis protein G, found in Shewanella baltica (strain OS223).